A 239-amino-acid chain; its full sequence is Ubiquinone biosynthesis O-methyltransferase (239 aa).

S-adenosyl-L-methionine is bound by residues R45, G64, D85, and M129.

Belongs to the methyltransferase superfamily. UbiG/COQ3 family.

The enzyme catalyses a 3-demethylubiquinol + S-adenosyl-L-methionine = a ubiquinol + S-adenosyl-L-homocysteine + H(+). It catalyses the reaction a 3-(all-trans-polyprenyl)benzene-1,2-diol + S-adenosyl-L-methionine = a 2-methoxy-6-(all-trans-polyprenyl)phenol + S-adenosyl-L-homocysteine + H(+). Its pathway is cofactor biosynthesis; ubiquinone biosynthesis. In terms of biological role, O-methyltransferase that catalyzes the 2 O-methylation steps in the ubiquinone biosynthetic pathway. This chain is Ubiquinone biosynthesis O-methyltransferase, found in Nitrosospira multiformis (strain ATCC 25196 / NCIMB 11849 / C 71).